We begin with the raw amino-acid sequence, 304 residues long: Mycothiol acetyltransferase (304 aa).

1D-myo-inositol 2-(L-cysteinylamino)-2-deoxy-alpha-D-glucopyranoside is bound at residue Glu-36. Position 73–75 (73–75) interacts with acetyl-CoA; that stretch reads LFV. The region spanning 145-304 is the N-acetyltransferase domain; that stretch reads LEIQTYTESV…EEHCVWAKSD (160 aa). 3 residues coordinate 1D-myo-inositol 2-(L-cysteinylamino)-2-deoxy-alpha-D-glucopyranoside: Glu-179, Lys-225, and Glu-236. 240–242 lines the acetyl-CoA pocket; sequence VGL. Tyr-274 contributes to the 1D-myo-inositol 2-(L-cysteinylamino)-2-deoxy-alpha-D-glucopyranoside binding site. 279–284 lines the acetyl-CoA pocket; sequence NDPAVK.

It belongs to the acetyltransferase family. MshD subfamily. As to quaternary structure, monomer.

It catalyses the reaction 1D-myo-inositol 2-(L-cysteinylamino)-2-deoxy-alpha-D-glucopyranoside + acetyl-CoA = mycothiol + CoA + H(+). Its function is as follows. Catalyzes the transfer of acetyl from acetyl-CoA to desacetylmycothiol (Cys-GlcN-Ins) to form mycothiol. The protein is Mycothiol acetyltransferase of Corynebacterium aurimucosum (strain ATCC 700975 / DSM 44827 / CIP 107346 / CN-1) (Corynebacterium nigricans).